A 352-amino-acid polypeptide reads, in one-letter code: Ribosome biogenesis protein BRX1 homolog (352 aa).

Residues 1-55 (MGKFSKIKKVQEEESAHQKMEWEAAGAKDSSSDDSSDESDNDDQPKQATEETRKR) are disordered. Residues 9–22 (KVQEEESAHQKMEW) are compositionally biased toward basic and acidic residues. The span at 32–42 (SDDSSDESDND) shows a compositional bias: acidic residues. Over residues 43–55 (DQPKQATEETRKR) the composition is skewed to basic and acidic residues. A Brix domain is found at 63-253 (ERVLVLCSRG…MVRLFAGSFE (191 aa)).

It belongs to the BRX1 family.

The protein resides in the nucleus. Its subcellular location is the nucleolus. In terms of biological role, required for biogenesis of the 60S ribosomal subunit. This chain is Ribosome biogenesis protein BRX1 homolog, found in Caenorhabditis elegans.